Reading from the N-terminus, the 152-residue chain is 6,7-dimethyl-8-ribityllumazine synthase (152 aa).

Residues phenylalanine 21, 55–57 (AFE), and 79–81 (CVI) each bind 5-amino-6-(D-ribitylamino)uracil. 84 to 85 (AT) is a binding site for (2S)-2-hydroxy-3-oxobutyl phosphate. The active-site Proton donor is histidine 87. Phenylalanine 112 is a binding site for 5-amino-6-(D-ribitylamino)uracil. Arginine 126 provides a ligand contact to (2S)-2-hydroxy-3-oxobutyl phosphate.

Belongs to the DMRL synthase family. In terms of assembly, forms an icosahedral capsid composed of 60 subunits, arranged as a dodecamer of pentamers.

The catalysed reaction is (2S)-2-hydroxy-3-oxobutyl phosphate + 5-amino-6-(D-ribitylamino)uracil = 6,7-dimethyl-8-(1-D-ribityl)lumazine + phosphate + 2 H2O + H(+). Its pathway is cofactor biosynthesis; riboflavin biosynthesis; riboflavin from 2-hydroxy-3-oxobutyl phosphate and 5-amino-6-(D-ribitylamino)uracil: step 1/2. Catalyzes the formation of 6,7-dimethyl-8-ribityllumazine by condensation of 5-amino-6-(D-ribitylamino)uracil with 3,4-dihydroxy-2-butanone 4-phosphate. This is the penultimate step in the biosynthesis of riboflavin. The polypeptide is 6,7-dimethyl-8-ribityllumazine synthase (Staphylococcus haemolyticus (strain JCSC1435)).